The chain runs to 903 residues: Translation initiation factor IF-2 (903 aa).

The tract at residues 66-296 is disordered; that stretch reads QATLKGEGPV…GRSRKREMEN (231 aa). Over residues 121 to 132 the composition is skewed to basic and acidic residues; it reads NTDETRVQEHKP. Low complexity-rich tracts occupy residues 139–152 and 178–195; these read AGDA…AAAG and AATG…GQQS. The span at 204-231 shows a compositional bias: basic and acidic residues; it reads EGRSRQDENKGSAREDQANRFATRDKEA. The segment covering 246–255 has biased composition (basic residues); it reads RRPAHSKPLR. Composition is skewed to basic and acidic residues over residues 263-276 and 285-296; these read VTKD…DRSN and ESGRSRKREMEN. The 170-residue stretch at 403–572 folds into the tr-type G domain; that stretch reads ERPPVVTVMG…LLTADVAELK (170 aa). The interval 412 to 419 is G1; the sequence is GHVDHGKT. 412 to 419 contributes to the GTP binding site; sequence GHVDHGKT. Positions 437-441 are G2; the sequence is GITQH. The tract at residues 458 to 461 is G3; sequence DTPG. GTP contacts are provided by residues 458 to 462 and 512 to 515; these read DTPGH and NKID. The tract at residues 512 to 515 is G4; it reads NKID. Residues 548–550 are G5; that stretch reads SAV.

It belongs to the TRAFAC class translation factor GTPase superfamily. Classic translation factor GTPase family. IF-2 subfamily.

It localises to the cytoplasm. One of the essential components for the initiation of protein synthesis. Protects formylmethionyl-tRNA from spontaneous hydrolysis and promotes its binding to the 30S ribosomal subunits. Also involved in the hydrolysis of GTP during the formation of the 70S ribosomal complex. The sequence is that of Translation initiation factor IF-2 from Moorella thermoacetica (strain ATCC 39073 / JCM 9320).